Here is a 385-residue protein sequence, read N- to C-terminus: Lipoyl synthase, mitochondrial (385 aa).

[4Fe-4S] cluster contacts are provided by cysteine 107, cysteine 112, cysteine 118, cysteine 137, cysteine 141, cysteine 144, and serine 352. Positions 122–341 (KKSEATATIM…RDTALKMGFL (220 aa)) constitute a Radical SAM core domain.

It belongs to the radical SAM superfamily. Lipoyl synthase family. [4Fe-4S] cluster serves as cofactor.

It is found in the mitochondrion. The enzyme catalyses [[Fe-S] cluster scaffold protein carrying a second [4Fe-4S](2+) cluster] + N(6)-octanoyl-L-lysyl-[protein] + 2 oxidized [2Fe-2S]-[ferredoxin] + 2 S-adenosyl-L-methionine + 4 H(+) = [[Fe-S] cluster scaffold protein] + N(6)-[(R)-dihydrolipoyl]-L-lysyl-[protein] + 4 Fe(3+) + 2 hydrogen sulfide + 2 5'-deoxyadenosine + 2 L-methionine + 2 reduced [2Fe-2S]-[ferredoxin]. It participates in protein modification; protein lipoylation via endogenous pathway; protein N(6)-(lipoyl)lysine from octanoyl-[acyl-carrier-protein]: step 2/2. Catalyzes the radical-mediated insertion of two sulfur atoms into the C-6 and C-8 positions of the octanoyl moiety bound to the lipoyl domains of lipoate-dependent enzymes, thereby converting the octanoylated domains into lipoylated derivatives. This Meyerozyma guilliermondii (strain ATCC 6260 / CBS 566 / DSM 6381 / JCM 1539 / NBRC 10279 / NRRL Y-324) (Yeast) protein is Lipoyl synthase, mitochondrial.